The sequence spans 531 residues: Cytosolic Fe-S cluster assembly factor NAR1 (531 aa).

Positions 20, 72, 75, 78, 184, and 239 each coordinate [4Fe-4S] cluster. Residues 395–426 (TSSTTTTKTNPLVARRKARLSSKRSESGAQDV) are disordered. Residues Cys442 and Cys446 each coordinate [4Fe-4S] cluster.

This sequence belongs to the NARF family.

Component of the cytosolic Fe/S protein assembly machinery. Required for maturation of extramitochondrial Fe/S proteins. May play a role in the transfer of pre-assembled Fe/S clusters to target apoproteins. In Meyerozyma guilliermondii (strain ATCC 6260 / CBS 566 / DSM 6381 / JCM 1539 / NBRC 10279 / NRRL Y-324) (Yeast), this protein is Cytosolic Fe-S cluster assembly factor NAR1 (NAR1).